The primary structure comprises 46 residues: Elongation factor Tu (46 aa).

A compositionally biased stretch (basic and acidic residues) spans 1–10; sequence MAKGKFERSK. The segment at 1–20 is disordered; it reads MAKGKFERSKPHVNVGTIGH. Residue 19–26 coordinates GTP; that stretch reads GHVDHGKT.

The protein belongs to the GTP-binding elongation factor family. EF-Tu/EF-1A subfamily. Monomer.

The protein resides in the cytoplasm. Functionally, this protein promotes the GTP-dependent binding of aminoacyl-tRNA to the A-site of ribosomes during protein biosynthesis. This is Elongation factor Tu (tufA) from Eikenella corrodens.